The sequence spans 306 residues: Lipoyl synthase (306 aa).

[4Fe-4S] cluster contacts are provided by Cys41, Cys46, Cys52, Cys68, Cys72, Cys75, and Ser281. The Radical SAM core domain occupies 54–270 (GARRTATFMI…RKVAMDKGFK (217 aa)). Residues 283 to 306 (HADEQVNEAAKEKHRLGEEKLQQN) are disordered.

Belongs to the radical SAM superfamily. Lipoyl synthase family. Requires [4Fe-4S] cluster as cofactor.

The protein localises to the cytoplasm. It catalyses the reaction [[Fe-S] cluster scaffold protein carrying a second [4Fe-4S](2+) cluster] + N(6)-octanoyl-L-lysyl-[protein] + 2 oxidized [2Fe-2S]-[ferredoxin] + 2 S-adenosyl-L-methionine + 4 H(+) = [[Fe-S] cluster scaffold protein] + N(6)-[(R)-dihydrolipoyl]-L-lysyl-[protein] + 4 Fe(3+) + 2 hydrogen sulfide + 2 5'-deoxyadenosine + 2 L-methionine + 2 reduced [2Fe-2S]-[ferredoxin]. It functions in the pathway protein modification; protein lipoylation via endogenous pathway; protein N(6)-(lipoyl)lysine from octanoyl-[acyl-carrier-protein]. In terms of biological role, catalyzes the radical-mediated insertion of two sulfur atoms into the C-6 and C-8 positions of the octanoyl moiety bound to the lipoyl domains of lipoate-dependent enzymes, thereby converting the octanoylated domains into lipoylated derivatives. This Staphylococcus haemolyticus (strain JCSC1435) protein is Lipoyl synthase.